The primary structure comprises 399 residues: Octopine dehydrogenase (399 aa).

Residues G10–G13 and F35–E38 contribute to the NADH site. Residues Q118 and T143 each coordinate pyruvate. Residue Q118 coordinates substrate. Residue C148 participates in NAD(+) binding. M206 lines the L-arginine pocket. H212 contacts pyruvate. Residue H212 is part of the active site. R324 provides a ligand contact to NAD(+).

This sequence belongs to the lysopine/nopaline/octopine/opine/vitopine dehydrogenases family.

It catalyses the reaction D-octopine + NAD(+) + H2O = L-arginine + pyruvate + NADH + H(+). Its activity is regulated as follows. Agmatine acts as a competitive inhibitor of the condensation reaction where the L-arginine and agmatine substrates compete for the same site. Catalyzes the reverse reaction of octopine dehydrogenation. Acts on L-arginine in preference to other substrates such as canavanine, cysteine, L-alanine, ornithine or norvaline, owing to the presence of the positively charged guanidium group. The sequence is that of Octopine dehydrogenase from Pecten maximus (King scallop).